The sequence spans 158 residues: Tryptophan-rich sensory protein (158 aa).

The next 5 membrane-spanning stretches (helical) occupy residues 5–25 (WALF…GALL), 44–65 (WVFP…MRVA), 73–93 (ALAF…VFFG), 97–119 (MATA…WAFF), and 124–144 (WAGV…GLNF).

The protein belongs to the TspO/BZRP family. In terms of assembly, homodimer.

The protein resides in the membrane. Its subcellular location is the cell inner membrane. May play a role in the transmembrane transport of tetrapyrroles and similar compounds, and thereby contribute to the regulation of tetrapyrrole biosynthesis. Binds tetrapyrroles and promotes the photooxidative degradation of protoporphyrin IX. Binds protoporphyrin IX, hemin, and coproporphyrin III, but does not bind delta-aminolevulinic acid. Can bind bilirubin, curcumin, gossypol, retinoic acid, cholesterol and the benzodiazepine receptor agonist PK-11195 (in vitro). Plays a role in the response to low oxygen levels and in the regulation of the biosynthesis of photosynthetic pigments. The sequence is that of Tryptophan-rich sensory protein from Cereibacter sphaeroides (Rhodobacter sphaeroides).